We begin with the raw amino-acid sequence, 358 residues long: UDP-N-acetylglucosamine--N-acetylmuramyl-(pentapeptide) pyrophosphoryl-undecaprenol N-acetylglucosamine transferase (358 aa).

UDP-N-acetyl-alpha-D-glucosamine-binding residues include R166, S196, and Q291.

Belongs to the glycosyltransferase 28 family. MurG subfamily.

The protein localises to the cell membrane. It catalyses the reaction Mur2Ac(oyl-L-Ala-gamma-D-Glu-L-Lys-D-Ala-D-Ala)-di-trans,octa-cis-undecaprenyl diphosphate + UDP-N-acetyl-alpha-D-glucosamine = beta-D-GlcNAc-(1-&gt;4)-Mur2Ac(oyl-L-Ala-gamma-D-Glu-L-Lys-D-Ala-D-Ala)-di-trans,octa-cis-undecaprenyl diphosphate + UDP + H(+). Its pathway is cell wall biogenesis; peptidoglycan biosynthesis. Cell wall formation. Catalyzes the transfer of a GlcNAc subunit on undecaprenyl-pyrophosphoryl-MurNAc-pentapeptide (lipid intermediate I) to form undecaprenyl-pyrophosphoryl-MurNAc-(pentapeptide)GlcNAc (lipid intermediate II). The sequence is that of UDP-N-acetylglucosamine--N-acetylmuramyl-(pentapeptide) pyrophosphoryl-undecaprenol N-acetylglucosamine transferase from Staphylococcus saprophyticus subsp. saprophyticus (strain ATCC 15305 / DSM 20229 / NCIMB 8711 / NCTC 7292 / S-41).